A 542-amino-acid chain; its full sequence is Chaperonin GroEL (542 aa).

Residues 29–32 (TLGP), 86–90 (DGTTT), Gly-413, 476–478 (NAA), and Asp-492 contribute to the ATP site. A disordered region spans residues 521-542 (QPDENGPAAGPDMGMGGMGGMM). Positions 533-542 (MGMGGMGGMM) are enriched in gly residues.

It belongs to the chaperonin (HSP60) family. As to quaternary structure, forms a cylinder of 14 subunits composed of two heptameric rings stacked back-to-back. Interacts with the co-chaperonin GroES.

Its subcellular location is the cytoplasm. The catalysed reaction is ATP + H2O + a folded polypeptide = ADP + phosphate + an unfolded polypeptide.. Functionally, together with its co-chaperonin GroES, plays an essential role in assisting protein folding. The GroEL-GroES system forms a nano-cage that allows encapsulation of the non-native substrate proteins and provides a physical environment optimized to promote and accelerate protein folding. In Listeria innocua serovar 6a (strain ATCC BAA-680 / CLIP 11262), this protein is Chaperonin GroEL.